We begin with the raw amino-acid sequence, 255 residues long: Hydroxyacylglutathione hydrolase (255 aa).

Zn(2+)-binding residues include histidine 56, histidine 58, aspartate 60, histidine 61, histidine 114, aspartate 133, and histidine 171.

This sequence belongs to the metallo-beta-lactamase superfamily. Glyoxalase II family. As to quaternary structure, monomer. Zn(2+) serves as cofactor.

The catalysed reaction is an S-(2-hydroxyacyl)glutathione + H2O = a 2-hydroxy carboxylate + glutathione + H(+). It participates in secondary metabolite metabolism; methylglyoxal degradation; (R)-lactate from methylglyoxal: step 2/2. Thiolesterase that catalyzes the hydrolysis of S-D-lactoyl-glutathione to form glutathione and D-lactic acid. This is Hydroxyacylglutathione hydrolase from Ruegeria pomeroyi (strain ATCC 700808 / DSM 15171 / DSS-3) (Silicibacter pomeroyi).